Reading from the N-terminus, the 96-residue chain is MNAVTVNDDGLVLRLYIQPKASRDSIVGLHGDEVKVAITAPPVDGQANSHLVKFLGKQFRVAKSQVVIEKGELGRHKQIKIINPQQIPPEIAALIN.

This sequence belongs to the UPF0235 family.

This chain is UPF0235 protein YggU, found in Escherichia coli (strain K12 / MC4100 / BW2952).